Here is a 206-residue protein sequence, read N- to C-terminus: Small ribosomal subunit protein eS8 (206 aa).

Residues 1–37 (MGISRDSRHKRSATGAKRAQFRKKRKFELGRQPANTK) are disordered.

Belongs to the eukaryotic ribosomal protein eS8 family. As to quaternary structure, component of the small ribosomal subunit. Mature ribosomes consist of a small (40S) and a large (60S) subunit. The 40S subunit contains about 32 different proteins and 1 molecule of RNA (18S). The 60S subunit contains 45 different proteins and 3 molecules of RNA (25S, 5.8S and 5S).

The protein resides in the cytoplasm. Functionally, component of the ribosome, a large ribonucleoprotein complex responsible for the synthesis of proteins in the cell. The small ribosomal subunit (SSU) binds messenger RNAs (mRNAs) and translates the encoded message by selecting cognate aminoacyl-transfer RNA (tRNA) molecules. The large subunit (LSU) contains the ribosomal catalytic site termed the peptidyl transferase center (PTC), which catalyzes the formation of peptide bonds, thereby polymerizing the amino acids delivered by tRNAs into a polypeptide chain. The nascent polypeptides leave the ribosome through a tunnel in the LSU and interact with protein factors that function in enzymatic processing, targeting, and the membrane insertion of nascent chains at the exit of the ribosomal tunnel. In Candida albicans (strain SC5314 / ATCC MYA-2876) (Yeast), this protein is Small ribosomal subunit protein eS8 (RPS8A).